The chain runs to 131 residues: Snaclec A8 (131 aa).

3 disulfide bridges follow: cysteine 2-cysteine 13, cysteine 30-cysteine 129, and cysteine 104-cysteine 121. The 122-residue stretch at 9-130 folds into the C-type lectin domain; it reads HEGHCYKVFN…CGQPYRFTCE (122 aa).

The protein belongs to the snaclec family. Heterodimer; disulfide-linked. In terms of tissue distribution, expressed by the venom gland.

It localises to the secreted. Its function is as follows. Interferes with one step of hemostasis (modulation of platelet aggregation, or coagulation cascade, for example). The protein is Snaclec A8 of Macrovipera lebetinus (Levantine viper).